Reading from the N-terminus, the 261-residue chain is Acyl-[acyl-carrier-protein]--UDP-N-acetylglucosamine O-acyltransferase (261 aa).

Belongs to the transferase hexapeptide repeat family. LpxA subfamily. Homotrimer.

The protein localises to the cytoplasm. It carries out the reaction a (3R)-hydroxyacyl-[ACP] + UDP-N-acetyl-alpha-D-glucosamine = a UDP-3-O-[(3R)-3-hydroxyacyl]-N-acetyl-alpha-D-glucosamine + holo-[ACP]. It functions in the pathway glycolipid biosynthesis; lipid IV(A) biosynthesis; lipid IV(A) from (3R)-3-hydroxytetradecanoyl-[acyl-carrier-protein] and UDP-N-acetyl-alpha-D-glucosamine: step 1/6. Involved in the biosynthesis of lipid A, a phosphorylated glycolipid that anchors the lipopolysaccharide to the outer membrane of the cell. The protein is Acyl-[acyl-carrier-protein]--UDP-N-acetylglucosamine O-acyltransferase of Sulfurimonas denitrificans (strain ATCC 33889 / DSM 1251) (Thiomicrospira denitrificans (strain ATCC 33889 / DSM 1251)).